A 1295-amino-acid polypeptide reads, in one-letter code: Phosphoribosylformylglycinamidine synthase (1295 aa).

ATP contacts are provided by residues 305–316 (GAATGSGGEIRD), 384–386 (TGY), and Ala-676. Residues Asp-677, Glu-716, Asn-720, and Asp-884 each contribute to the Mg(2+) site. Ser-886 serves as a coordination point for ATP. The region spanning 1042-1295 (VAILREQGVN…MFRNARKHLG (254 aa)) is the Glutamine amidotransferase type-1 domain. Cys-1135 serves as the catalytic Nucleophile. Active-site residues include His-1260 and Glu-1262.

This sequence in the N-terminal section; belongs to the FGAMS family. Monomer.

It is found in the cytoplasm. The catalysed reaction is N(2)-formyl-N(1)-(5-phospho-beta-D-ribosyl)glycinamide + L-glutamine + ATP + H2O = 2-formamido-N(1)-(5-O-phospho-beta-D-ribosyl)acetamidine + L-glutamate + ADP + phosphate + H(+). The protein operates within purine metabolism; IMP biosynthesis via de novo pathway; 5-amino-1-(5-phospho-D-ribosyl)imidazole from N(2)-formyl-N(1)-(5-phospho-D-ribosyl)glycinamide: step 1/2. Phosphoribosylformylglycinamidine synthase involved in the purines biosynthetic pathway. Catalyzes the ATP-dependent conversion of formylglycinamide ribonucleotide (FGAR) and glutamine to yield formylglycinamidine ribonucleotide (FGAM) and glutamate. In Idiomarina loihiensis (strain ATCC BAA-735 / DSM 15497 / L2-TR), this protein is Phosphoribosylformylglycinamidine synthase.